A 3590-amino-acid polypeptide reads, in one-letter code: Filamentous hemagglutinin (3590 aa).

Disordered stretches follow at residues 3256–3309 (GGGS…VEVS) and 3417–3498 (APPP…GRHV). The span at 3289–3299 (PSRPTTPPASP) shows a compositional bias: pro residues. A compositionally biased stretch (low complexity) spans 3300–3309 (QPIRATVEVS). Over residues 3417–3432 (APPPVVETAQPLPPVK) the composition is skewed to pro residues.

It is found in the cell surface. Its function is as follows. Evidence for a role in host-cell binding and infection. This Bordetella pertussis (strain Tohama I / ATCC BAA-589 / NCTC 13251) protein is Filamentous hemagglutinin (fhaB).